Consider the following 710-residue polypeptide: MLQSMGDGEISISPYDTAWVALVEDDGGGRRQPQFPSSLEWISSNQLADGSWGDAGTFSIFDRILNTLACVVALRSWNIHPHKTDKGIWFMKKNMCRIDEENLEHMPIGFEVALPSLIDIAKKLEIDIPTQTRGLQEIYARREIKLKKIPRDIMHQVPTTLLHSLEGMAGLKWEKLLKLQSQDGSFLFSPSSTAFALQQTRDHGCLKYLTNHIHKFNGGVPNVYPVDLFEHLWAVDRLQRLGLSRYFQPEIEECIAYVHRQWTEKGICWARNSQVEDIDDTAMGFRLLRLHGYEVSADVFRHFKSDGGEFFCFKGQSTQAVTGMYNLYRASQLMFPGENILVDAARFSANFLQLKRANNDLLDKWIITKDLPGEVGYALDVPWYASLPRVETRFYLDQYGGDDDVWIGKTLYRMPYVNNNKYLELAKLDYNNCQALHQQEWQNIQKWYRSCSLGEFGMTERSLLQTYYVAAASVFEPEKSQERLAWAKTAILMETISSHFEFQQLSRDQKRAFITEFEHDSILKYTNGGRYKRRSSLVGTLVRTLNHLSLDILLAHGRDIHQPLKNAWCKWLNSWEEGGDAELLLRTLNLMSGGGRRRRWASEELLSSNPKHEQLLKATIGVCDKLRLFQRRKVQGGNGCMNATGITTVEIESEMRELVKLVVTRSSSEDLDSEIKQNFLTIARSFYYAAYCNQGTINFHIAKVLFEKVL.

K145 contributes to the substrate binding site. The Mg(2+) site is built by D277 and D279. The short motif at 277–280 (DIDD) is the DXDD motif element. K364 provides a ligand contact to substrate.

It belongs to the terpene synthase family. Tpsc subfamily. Requires Mg(2+) as cofactor. As to expression, expressed in germinating seeds and leaves.

It carries out the reaction (2E,6E,10E)-geranylgeranyl diphosphate = ent-copalyl diphosphate. The protein operates within plant hormone biosynthesis; gibberellin biosynthesis. It functions in the pathway secondary metabolite biosynthesis; terpenoid biosynthesis. In terms of biological role, involved in the biosynthesis of ent-kaurene diterpenoids natural products such as oridonin, miltiradiene, eriocalyxin B and nezukol, known to exhibit antitumor, anti-inflammatory and antibacterial activities, and in the production of gibberellins phytohormones. Catalyzes the conversion of (2E,6E,10E)-geranylgeranyl diphosphate (GGPP) to ent-copalyl diphosphate (ent-CPP). The chain is Ent-copalyl diphosphate synthase 1 from Isodon eriocalyx (Plectranthus eriocalyx).